We begin with the raw amino-acid sequence, 122 residues long: Ribosome-binding factor A (122 aa).

It belongs to the RbfA family. As to quaternary structure, monomer. Binds 30S ribosomal subunits, but not 50S ribosomal subunits or 70S ribosomes.

It localises to the cytoplasm. Functionally, one of several proteins that assist in the late maturation steps of the functional core of the 30S ribosomal subunit. Associates with free 30S ribosomal subunits (but not with 30S subunits that are part of 70S ribosomes or polysomes). Required for efficient processing of 16S rRNA. May interact with the 5'-terminal helix region of 16S rRNA. The protein is Ribosome-binding factor A of Polaromonas naphthalenivorans (strain CJ2).